A 185-amino-acid polypeptide reads, in one-letter code: Urease accessory protein UreE (185 aa).

Residues 153–185 (LRANSAQGHGHSHSHSHDHHGYHHHGDGHWHKH) form a disordered region. Over residues 162-175 (GHSHSHSHDHHGYH) the composition is skewed to basic residues. Residues 176 to 185 (HHGDGHWHKH) show a composition bias toward basic and acidic residues.

The protein belongs to the UreE family.

The protein resides in the cytoplasm. Involved in urease metallocenter assembly. Binds nickel. Probably functions as a nickel donor during metallocenter assembly. This Haemophilus influenzae (strain PittEE) protein is Urease accessory protein UreE.